The chain runs to 76 residues: Small ribosomal subunit protein bS16c (76 aa).

Belongs to the bacterial ribosomal protein bS16 family.

Its subcellular location is the plastid. It localises to the chloroplast. The polypeptide is Small ribosomal subunit protein bS16c (Guillardia theta (Cryptophyte)).